Here is an 86-residue protein sequence, read N- to C-terminus: uncharacterized protein (86 aa).

4Fe-4S ferredoxin-type domains lie at Met1–Glu29 and Tyr31–Glu65. [4Fe-4S] cluster contacts are provided by Cys9, Cys12, Cys15, Cys19, Cys38, Cys41, Cys50, and Cys54.

The cofactor is [4Fe-4S] cluster.

This is an uncharacterized protein from Haemophilus influenzae (strain ATCC 51907 / DSM 11121 / KW20 / Rd).